The sequence spans 890 residues: DNA mismatch repair protein MutS (890 aa).

634 to 641 contributes to the ATP binding site; that stretch reads GPNMGGKS.

It belongs to the DNA mismatch repair MutS family.

Functionally, this protein is involved in the repair of mismatches in DNA. It is possible that it carries out the mismatch recognition step. This protein has a weak ATPase activity. The sequence is that of DNA mismatch repair protein MutS from Burkholderia pseudomallei (strain K96243).